Here is a 101-residue protein sequence, read N- to C-terminus: Small ribosomal subunit protein uS10 (101 aa).

Belongs to the universal ribosomal protein uS10 family. In terms of assembly, part of the 30S ribosomal subunit.

Involved in the binding of tRNA to the ribosomes. The chain is Small ribosomal subunit protein uS10 from Ureaplasma parvum serovar 3 (strain ATCC 27815 / 27 / NCTC 11736).